The sequence spans 411 residues: Multifunctional CCA protein (411 aa).

G8 and R11 together coordinate ATP. CTP is bound by residues G8 and R11. Residues D21 and D23 each coordinate Mg(2+). R91, R137, and R140 together coordinate ATP. CTP is bound by residues R91, R137, and R140. The HD domain maps to 228–329 (CGIHTLMVAK…VNILDQIDSW (102 aa)).

It belongs to the tRNA nucleotidyltransferase/poly(A) polymerase family. Bacterial CCA-adding enzyme type 1 subfamily. Monomer. Can also form homodimers and oligomers. Mg(2+) is required as a cofactor. Requires Ni(2+) as cofactor.

It catalyses the reaction a tRNA precursor + 2 CTP + ATP = a tRNA with a 3' CCA end + 3 diphosphate. The enzyme catalyses a tRNA with a 3' CCA end + 2 CTP + ATP = a tRNA with a 3' CCACCA end + 3 diphosphate. In terms of biological role, catalyzes the addition and repair of the essential 3'-terminal CCA sequence in tRNAs without using a nucleic acid template. Adds these three nucleotides in the order of C, C, and A to the tRNA nucleotide-73, using CTP and ATP as substrates and producing inorganic pyrophosphate. tRNA 3'-terminal CCA addition is required both for tRNA processing and repair. Also involved in tRNA surveillance by mediating tandem CCA addition to generate a CCACCA at the 3' terminus of unstable tRNAs. While stable tRNAs receive only 3'-terminal CCA, unstable tRNAs are marked with CCACCA and rapidly degraded. The protein is Multifunctional CCA protein of Photobacterium profundum (strain SS9).